A 310-amino-acid chain; its full sequence is tRNA dimethylallyltransferase (310 aa).

Residue 14-21 (GPTASGKT) coordinates ATP. 16-21 (TASGKT) provides a ligand contact to substrate. Interaction with substrate tRNA regions lie at residues 39–42 (DSAL), 163–167 (QRLSR), and 244–249 (RCVGYR).

This sequence belongs to the IPP transferase family. As to quaternary structure, monomer. Requires Mg(2+) as cofactor.

The enzyme catalyses adenosine(37) in tRNA + dimethylallyl diphosphate = N(6)-dimethylallyladenosine(37) in tRNA + diphosphate. Catalyzes the transfer of a dimethylallyl group onto the adenine at position 37 in tRNAs that read codons beginning with uridine, leading to the formation of N6-(dimethylallyl)adenosine (i(6)A). The polypeptide is tRNA dimethylallyltransferase (Aeromonas salmonicida (strain A449)).